The primary structure comprises 81 residues: Cytochrome b559 subunit alpha (81 aa).

The chain crosses the membrane as a helical span at residues 21–35; that stretch reads VIHALTIPALFLAGW. His-23 contributes to the heme binding site.

Belongs to the PsbE/PsbF family. In terms of assembly, heterodimer of an alpha subunit and a beta subunit. PSII is composed of 1 copy each of membrane proteins PsbA, PsbB, PsbC, PsbD, PsbE, PsbF, PsbH, PsbI, PsbJ, PsbK, PsbL, PsbM, PsbT, PsbX, PsbY, PsbZ, Psb30/Ycf12, peripheral proteins PsbO, CyanoQ (PsbQ), PsbU, PsbV and a large number of cofactors. It forms dimeric complexes. The cofactor is heme b.

It localises to the cellular thylakoid membrane. This b-type cytochrome is tightly associated with the reaction center of photosystem II (PSII). PSII is a light-driven water:plastoquinone oxidoreductase that uses light energy to abstract electrons from H(2)O, generating O(2) and a proton gradient subsequently used for ATP formation. It consists of a core antenna complex that captures photons, and an electron transfer chain that converts photonic excitation into a charge separation. The protein is Cytochrome b559 subunit alpha of Synechococcus sp. (strain JA-3-3Ab) (Cyanobacteria bacterium Yellowstone A-Prime).